The following is a 250-amino-acid chain: Hemocyanin, units C and D (250 aa).

His-1 contacts Cu cation. The tract at residues 1–106 (HGSTKWCPSP…RAWIEPVTSA (106 aa)) is unit C. Cys-7 and Cys-18 are disulfide-bonded. The segment at residues 19–21 (CHH) is a cross-link (2'-(S-cysteinyl)-histidine (Cys-His)). Residues His-21 and His-143 each contribute to the Cu cation site. The interval 107 to 250 (VRIRKNLNDL…DAQDVIYNNH (144 aa)) is unit D. The cysteines at positions 149 and 160 are disulfide-linked. The segment at residues 161-163 (CLH) is a cross-link (2'-(S-cysteinyl)-histidine (Cys-His)). His-172 serves as a coordination point for Cu cation.

It belongs to the tyrosinase family. Hemocyanin subfamily. In terms of assembly, decamers of large identical subunits (390 kDa), each containing 8 globular oxygen-binding functional units. Cu(2+) is required as a cofactor.

Hemocyanins are copper-containing oxygen carriers occurring freely dissolved in the hemolymph of many mollusks and arthropods. This Sepia officinalis (Common cuttlefish) protein is Hemocyanin, units C and D.